The following is a 257-amino-acid chain: Putative hydro-lyase Bphy_2364 (257 aa).

The protein belongs to the D-glutamate cyclase family.

The sequence is that of Putative hydro-lyase Bphy_2364 from Paraburkholderia phymatum (strain DSM 17167 / CIP 108236 / LMG 21445 / STM815) (Burkholderia phymatum).